A 1458-amino-acid polypeptide reads, in one-letter code: DNA polymerase alpha catalytic subunit (1458 aa).

Disordered stretches follow at residues 1–25 and 89–119; these read MSDS…RKEA and DLED…SVSK. Residues 15–25 are compositionally biased toward basic and acidic residues; sequence EKTEKSGRKEA. DNA-binding stretches follow at residues 650–715 and 1241–1373; these read RINS…VHQI and QFRA…ACSK. Zn(2+)-binding residues include C1280, C1283, C1307, C1312, C1345, C1350, C1368, and C1371. The segment at 1280–1310 adopts a CysA-type zinc-finger fold; that stretch reads CPKCGTENIYDNVFDGSGLQIEPGLKRCSKP. Residues 1345-1371 carry the CysB motif motif; sequence CEEKTCQNRTRRLPLSFSRNGPICQAC.

This sequence belongs to the DNA polymerase type-B family. The DNA polymerase alpha complex is composed of four subunits: the catalytic subunit POLA1, the regulatory subunit POLA2, and the small and the large primase subunits PRIM1 and PRIM2 respectively. Interacts with PARP1; this interaction functions as part of the control of replication fork progression. Interacts with MCM10 and WDHD1; these interactions recruit the polymerase alpha complex to the pre-replicative complex bound to DNA. Interacts with RPA1; this interaction stabilizes the replicative complex and reduces the misincorporation rate of DNA polymerase alpha by acting as a fidelity clamp.

It localises to the nucleus. It catalyses the reaction DNA(n) + a 2'-deoxyribonucleoside 5'-triphosphate = DNA(n+1) + diphosphate. Its function is as follows. Plays an essential role in the initiation of DNA replication. During the S phase of the cell cycle, the DNA polymerase alpha complex (composed of a catalytic subunit POLA1/p180, a regulatory subunit POLA2/p70 and two primase subunits PRIM1/p49 and PRIM2/p58) is recruited to DNA at the replicative forks via direct interactions with MCM10 and WDHD1. The primase subunit of the polymerase alpha complex initiates DNA synthesis by oligomerising short RNA primers on both leading and lagging strands. These primers are initially extended by the polymerase alpha catalytic subunit and subsequently transferred to polymerase delta and polymerase epsilon for processive synthesis on the lagging and leading strand, respectively. The reason this transfer occurs is because the polymerase alpha has limited processivity and lacks intrinsic 3' exonuclease activity for proofreading error, and therefore is not well suited for replicating long complexes. This chain is DNA polymerase alpha catalytic subunit (pola1), found in Xenopus laevis (African clawed frog).